Here is a 406-residue protein sequence, read N- to C-terminus: Peptidase T (406 aa).

H78 contributes to the Zn(2+) binding site. D80 is an active-site residue. D139 lines the Zn(2+) pocket. E173 serves as the catalytic Proton acceptor. Zn(2+)-binding residues include E174, D196, and H378.

Belongs to the peptidase M20B family. Requires Zn(2+) as cofactor.

Its subcellular location is the cytoplasm. The enzyme catalyses Release of the N-terminal residue from a tripeptide.. Cleaves the N-terminal amino acid of tripeptides. This is Peptidase T from Clostridium perfringens (strain ATCC 13124 / DSM 756 / JCM 1290 / NCIMB 6125 / NCTC 8237 / Type A).